Reading from the N-terminus, the 226-residue chain is Ribonuclease 3 (226 aa).

The RNase III domain maps to 7-129; the sequence is DARLQQALGY…LFGAVFLDAG (123 aa). Glutamate 42 contacts Mg(2+). The active site involves aspartate 46. Residues aspartate 115 and glutamate 118 each contribute to the Mg(2+) site. The active site involves glutamate 118. The 71-residue stretch at 156–226 folds into the DRBM domain; the sequence is DPKTRLQEIL…ARQACAELQR (71 aa).

It belongs to the ribonuclease III family. As to quaternary structure, homodimer. It depends on Mg(2+) as a cofactor.

The protein localises to the cytoplasm. It carries out the reaction Endonucleolytic cleavage to 5'-phosphomonoester.. Functionally, digests double-stranded RNA. Involved in the processing of primary rRNA transcript to yield the immediate precursors to the large and small rRNAs (23S and 16S). Processes some mRNAs, and tRNAs when they are encoded in the rRNA operon. Processes pre-crRNA and tracrRNA of type II CRISPR loci if present in the organism. The chain is Ribonuclease 3 from Thiobacillus denitrificans (strain ATCC 25259 / T1).